Reading from the N-terminus, the 161-residue chain is Large ribosomal subunit protein uL30m (161 aa).

A mitochondrion-targeting transit peptide spans 1–34 (MAGILRSIVQRPPGRLQTATKGVEPLVCVDWIRH).

Belongs to the universal ribosomal protein uL30 family. Component of the mitochondrial ribosome large subunit (39S) which comprises a 16S rRNA and about 50 distinct proteins.

It is found in the mitochondrion. The sequence is that of Large ribosomal subunit protein uL30m (MRPL30) from Bos taurus (Bovine).